Reading from the N-terminus, the 258-residue chain is Thrombin-like enzyme CPI-enzyme 2 (258 aa).

Residues 1–18 (MVLIRVLANLLILQLSYA) form the signal peptide. A propeptide spanning residues 19–24 (QKSSEL) is cleaved from the precursor. Positions 25–249 (VIGGDECNIN…YTDWIENIIA (225 aa)) constitute a Peptidase S1 domain. Disulfide bonds link cysteine 31-cysteine 163, cysteine 50-cysteine 66, cysteine 98-cysteine 256, cysteine 142-cysteine 210, cysteine 174-cysteine 189, and cysteine 200-cysteine 225. N-linked (GlcNAc...) asparagine glycosylation is present at asparagine 44. The Charge relay system role is filled by histidine 65. Asparagine 79 and asparagine 103 each carry an N-linked (GlcNAc...) asparagine glycan. The active-site Charge relay system is aspartate 110. Residue asparagine 121 is glycosylated (N-linked (GlcNAc...) asparagine). Residue serine 204 is the Charge relay system of the active site.

The protein belongs to the peptidase S1 family. Snake venom subfamily. Monomer. Post-translationally, N-glycosylated. Expressed by the venom gland.

The protein localises to the secreted. Thrombin-like snake venom serine protease that cleaves fibrinogen beta (FGB) releasing fibrinopeptide B. Promotes capillary permeability-increasing activity through the release of peptides from the beta-chain of fibrinogen. This is Thrombin-like enzyme CPI-enzyme 2 from Gloydius ussuriensis (Ussuri mamushi).